The primary structure comprises 168 residues: Plastocyanin, chloroplastic (168 aa).

A chloroplast-targeting transit peptide spans 1-69 (MATVTSTTVA…SAVLASNALA (69 aa)). Residues 70 to 168 (VEVLLGASDG…AGMVGQVTVN (99 aa)) enclose the Plastocyanin-like domain. His106, Cys153, His156, and Met161 together coordinate Cu cation.

It belongs to the plastocyanin family. Requires Cu(2+) as cofactor.

The protein resides in the plastid. It is found in the chloroplast thylakoid membrane. Participates in electron transfer between P700 and the cytochrome b6-f complex in photosystem I. In Pisum sativum (Garden pea), this protein is Plastocyanin, chloroplastic (PETE).